The primary structure comprises 389 residues: GTPase Obg (389 aa).

Positions 1–159 (MKFVDEAVIK…RELRLELLLL (159 aa)) constitute an Obg domain. The region spanning 160–333 (ADVGMLGLPN…LCYKLADFME (174 aa)) is the OBG-type G domain. GTP-binding positions include 166-173 (GLPNAGKS), 191-195 (FTTLI), 213-216 (DIPG), 283-286 (NKVD), and 314-316 (SAV). Mg(2+) is bound by residues Ser-173 and Thr-193. Residues 359-389 (NQGEVITEDDDDDWDDWDDEEDDGHVIYVRE) form a disordered region. The span at 364-381 (ITEDDDDDWDDWDDEEDD) shows a compositional bias: acidic residues.

The protein belongs to the TRAFAC class OBG-HflX-like GTPase superfamily. OBG GTPase family. In terms of assembly, monomer. Mg(2+) serves as cofactor.

It is found in the cytoplasm. Its function is as follows. An essential GTPase which binds GTP, GDP and possibly (p)ppGpp with moderate affinity, with high nucleotide exchange rates and a fairly low GTP hydrolysis rate. Plays a role in control of the cell cycle, stress response, ribosome biogenesis and in those bacteria that undergo differentiation, in morphogenesis control. The protein is GTPase Obg of Vibrio vulnificus (strain CMCP6).